The primary structure comprises 217 residues: HTH-type transcriptional regulator EthR (217 aa).

A disordered region spans residues 1-22; sequence MTTASQTRTPRGRRSARPSGDD. One can recognise an HTH tetR-type domain in the interval 21-81; that stretch reads DDREAAILAT…SLIDPLIKRA (61 aa). Residues 44–63 constitute a DNA-binding region (H-T-H motif); sequence SVDDLAKGAGISRPTFYFYF.

As to quaternary structure, homodimer.

Involved in the repression of teh monooxygenase EthA which is responsible of the formation of the active metabolite of ethionamide (ETH). The sequence is that of HTH-type transcriptional regulator EthR (ethR) from Mycolicibacterium smegmatis (strain ATCC 700084 / mc(2)155) (Mycobacterium smegmatis).